The sequence spans 128 residues: Cystatin-2 (128 aa).

The first 19 residues, 1–19 (MSSFKVAVLLIAVYGASQG), serve as a signal peptide directing secretion. One can recognise a Cystatin domain in the interval 29 to 116 (QDPTEARFLE…CVAVIYHVPW (88 aa)). Cystine bridges form between Cys84–Cys96 and Cys107–Cys127.

Belongs to the cystatin family. As to expression, widely expressed. Detected in salivary glands (at protein level), gut (at protein level), ovaries, and Malpighian tubules.

It is found in the secreted. In terms of biological role, inhibitor of cysteine proteinases with broad specificity for mammalian cathepsins, including endopeptidases (cathepsins L and S) and exopeptidases (cathepsins B, C and H). Also inhibits endogenous cathepsin B-like and cathepsin C-like proteinases. Does not inhibit human legumain. May mimic specific host-derived cystatin(s) to interfere with its/their function in controlling cathepsin-mediated proteolysis. Affects the function of antigen-presenting mouse dendritic cells by reducing the production of the pro-inflammatory cytokines TNF and interleukin-12, and proliferation of antigen-specific CD4+ T-cells, suggesting it may suppress the host adaptive immune response. It is noteworthy that immunization of mice with this protein reduces O.moubata survival in infestation experiments. The chain is Cystatin-2 from Ornithodoros moubata (Soft tick).